Reading from the N-terminus, the 100-residue chain is Large ribosomal subunit protein uL23 (100 aa).

The protein belongs to the universal ribosomal protein uL23 family. As to quaternary structure, part of the 50S ribosomal subunit. Contacts protein L29, and trigger factor when it is bound to the ribosome.

Functionally, one of the early assembly proteins it binds 23S rRNA. One of the proteins that surrounds the polypeptide exit tunnel on the outside of the ribosome. Forms the main docking site for trigger factor binding to the ribosome. The polypeptide is Large ribosomal subunit protein uL23 (Buchnera aphidicola subsp. Schizaphis graminum (strain Sg)).